Reading from the N-terminus, the 517-residue chain is UDP-N-acetylmuramoyl-tripeptide--D-alanyl-D-alanine ligase (517 aa).

138–144 (GSSGKTS) serves as a coordination point for ATP.

This sequence belongs to the MurCDEF family. MurF subfamily.

It localises to the cytoplasm. The catalysed reaction is D-alanyl-D-alanine + UDP-N-acetyl-alpha-D-muramoyl-L-alanyl-gamma-D-glutamyl-meso-2,6-diaminopimelate + ATP = UDP-N-acetyl-alpha-D-muramoyl-L-alanyl-gamma-D-glutamyl-meso-2,6-diaminopimeloyl-D-alanyl-D-alanine + ADP + phosphate + H(+). It functions in the pathway cell wall biogenesis; peptidoglycan biosynthesis. Its function is as follows. Involved in cell wall formation. Catalyzes the final step in the synthesis of UDP-N-acetylmuramoyl-pentapeptide, the precursor of murein. In Mycobacterium leprae (strain TN), this protein is UDP-N-acetylmuramoyl-tripeptide--D-alanyl-D-alanine ligase.